The sequence spans 414 residues: Serine hydroxymethyltransferase (414 aa).

(6S)-5,6,7,8-tetrahydrofolate contacts are provided by residues L116 and 120 to 122; that span reads GHL. At K224 the chain carries N6-(pyridoxal phosphate)lysine. 348–350 contacts (6S)-5,6,7,8-tetrahydrofolate; the sequence is SPF.

It belongs to the SHMT family. In terms of assembly, homodimer. It depends on pyridoxal 5'-phosphate as a cofactor.

Its subcellular location is the cytoplasm. The catalysed reaction is (6R)-5,10-methylene-5,6,7,8-tetrahydrofolate + glycine + H2O = (6S)-5,6,7,8-tetrahydrofolate + L-serine. It participates in one-carbon metabolism; tetrahydrofolate interconversion. It functions in the pathway amino-acid biosynthesis; glycine biosynthesis; glycine from L-serine: step 1/1. Functionally, catalyzes the reversible interconversion of serine and glycine with tetrahydrofolate (THF) serving as the one-carbon carrier. This reaction serves as the major source of one-carbon groups required for the biosynthesis of purines, thymidylate, methionine, and other important biomolecules. Also exhibits THF-independent aldolase activity toward beta-hydroxyamino acids, producing glycine and aldehydes, via a retro-aldol mechanism. The polypeptide is Serine hydroxymethyltransferase (Campylobacter jejuni subsp. doylei (strain ATCC BAA-1458 / RM4099 / 269.97)).